The chain runs to 415 residues: Protein PIN-LIKES 4 (415 aa).

Residues 1–13 lie on the Lumenal side of the membrane; it reads MKLLELFIASSKP. A helical membrane pass occupies residues 14-34; sequence VVETLLITSVGFYLALDTVNL. Topologically, residues 35-44 are cytoplasmic; it reads LGHDARKHLN. Residues 45 to 61 form a helical membrane-spanning segment; that stretch reads NIVFYVFSPSLIGSRLA. Residues 62–75 are Lumenal-facing; it reads DSVTYESLVKMWFM. Residues 76–96 traverse the membrane as a helical segment; that stretch reads PVNVLLTFMIGSLLGWIVIVI. Residues 97-106 lie on the Cytoplasmic side of the membrane; that stretch reads TKPPSQLRGL. The chain crosses the membrane as a helical span at residues 107–127; it reads IISCCASGNLGTMPLIIIPAI. The Lumenal portion of the chain corresponds to 128-143; the sequence is CKEKGGPFGDSESCEK. A helical membrane pass occupies residues 144–161; that stretch reads YGMGYVTLSMTAFFISVY. Topologically, residues 162–244 are cytoplasmic; it reads KHDTNWYVSG…RVVSLSKKVN (83 aa). Residues 245–265 form a helical membrane-spanning segment; that stretch reads LGSIFAPATIAAIIALVIGLI. Over 266-285 the chain is Lumenal; sequence TPLRNLIIGTVAPFRVIQDS. A helical membrane pass occupies residues 286-306; that stretch reads LTLLGDGAIPAMTLILGGNLL. Residues 307-322 are Cytoplasmic-facing; that stretch reads KGMRRSEVRSSEMKNS. A helical membrane pass occupies residues 323–343; it reads CIIGVLVARYILLPVSGVLLV. Topologically, residues 344-355 are lumenal; sequence RGAYKLDLVTSE. Residues 356 to 376 traverse the membrane as a helical segment; the sequence is PLYQFVLLLQYAVPPAMNLGT. The Cytoplasmic segment spans residues 377-389; sequence KTQLFGAGESECS. Residues 390 to 410 traverse the membrane as a helical segment; the sequence is VIMLWTYSLAAVSLTVWPTFF. At 411–415 the chain is on the lumenal side; sequence MWLVT.

This sequence belongs to the auxin efflux carrier (TC 2.A.69.2) family. As to expression, expressed in seedlings, rosette and cauline leaves, stems, flowers and siliques.

The protein localises to the endoplasmic reticulum membrane. Functionally, involved in cellular auxin homeostasis by regulating auxin metabolism. Regulates intracellular auxin accumulation at the endoplasmic reticulum and thus auxin availability for nuclear auxin signaling. The polypeptide is Protein PIN-LIKES 4 (Arabidopsis thaliana (Mouse-ear cress)).